The primary structure comprises 414 residues: uncharacterized protein (414 aa).

Residues 246–360 (EAPNITKLAG…LNKRVEEIRR (115 aa)) enclose the Nop domain. The tract at residues 358–414 (IRRKYPKPPKKKKKEKPKAKKKEKKGKKEKSKKKKDKKKDKKGKKERKVIGKTKSRK) is disordered. The segment covering 361–414 (KYPKPPKKKKKEKPKAKKKEKKGKKEKSKKKKDKKKDKKGKKERKVIGKTKSRK) has biased composition (basic residues).

The protein belongs to the NOP5/NOP56 family.

This is an uncharacterized protein from Methanocaldococcus jannaschii (strain ATCC 43067 / DSM 2661 / JAL-1 / JCM 10045 / NBRC 100440) (Methanococcus jannaschii).